The sequence spans 237 residues: 1-(5-phosphoribosyl)-5-[(5-phosphoribosylamino)methylideneamino] imidazole-4-carboxamide isomerase (237 aa).

Asp8 acts as the Proton acceptor in catalysis. The active-site Proton donor is Asp127.

Belongs to the HisA/HisF family.

It is found in the cytoplasm. The enzyme catalyses 1-(5-phospho-beta-D-ribosyl)-5-[(5-phospho-beta-D-ribosylamino)methylideneamino]imidazole-4-carboxamide = 5-[(5-phospho-1-deoxy-D-ribulos-1-ylimino)methylamino]-1-(5-phospho-beta-D-ribosyl)imidazole-4-carboxamide. It participates in amino-acid biosynthesis; L-histidine biosynthesis; L-histidine from 5-phospho-alpha-D-ribose 1-diphosphate: step 4/9. This is 1-(5-phosphoribosyl)-5-[(5-phosphoribosylamino)methylideneamino] imidazole-4-carboxamide isomerase from Sulfurovum sp. (strain NBC37-1).